The chain runs to 650 residues: Acetyl-coenzyme A synthetase (650 aa).

Residues 191-194 (RGGR), threonine 311, and asparagine 335 contribute to the CoA site. ATP-binding positions include 387-389 (GEP), 411-416 (DTWWQT), aspartate 500, and arginine 515. A CoA-binding site is contributed by serine 523. Arginine 526 contacts ATP. Mg(2+)-binding residues include valine 537, histidine 539, and valine 542. Arginine 584 is a CoA binding site. The residue at position 609 (lysine 609) is an N6-acetyllysine.

It belongs to the ATP-dependent AMP-binding enzyme family. Mg(2+) is required as a cofactor. In terms of processing, acetylated. Deacetylation by the SIR2-homolog deacetylase activates the enzyme.

It catalyses the reaction acetate + ATP + CoA = acetyl-CoA + AMP + diphosphate. Its function is as follows. Catalyzes the conversion of acetate into acetyl-CoA (AcCoA), an essential intermediate at the junction of anabolic and catabolic pathways. AcsA undergoes a two-step reaction. In the first half reaction, AcsA combines acetate with ATP to form acetyl-adenylate (AcAMP) intermediate. In the second half reaction, it can then transfer the acetyl group from AcAMP to the sulfhydryl group of CoA, forming the product AcCoA. This chain is Acetyl-coenzyme A synthetase, found in Shewanella putrefaciens (strain CN-32 / ATCC BAA-453).